Here is a 180-residue protein sequence, read N- to C-terminus: UPF0340 protein llmg_0465 (180 aa).

Belongs to the UPF0340 family.

This Lactococcus lactis subsp. cremoris (strain MG1363) protein is UPF0340 protein llmg_0465.